A 628-amino-acid polypeptide reads, in one-letter code: Hemocyanin II (628 aa).

Position 1 is a blocked amino end (Thr); partial (Thr-1). Residues His-173, His-177, His-204, His-324, His-328, and His-364 each contribute to the Cu cation site. Residue Asn-449 is glycosylated (N-linked (GlcNAc...) asparagine). Intrachain disulfides connect Cys-534–Cys-576 and Cys-536–Cys-583.

Belongs to the tyrosinase family. Hemocyanin subfamily. In terms of assembly, hexamer or a multiple thereof. In terms of tissue distribution, hemolymph.

The protein resides in the secreted. It is found in the extracellular space. In terms of biological role, hemocyanins are copper-containing oxygen carriers occurring freely dissolved in the hemolymph of many mollusks and arthropods. The chain is Hemocyanin II from Limulus polyphemus (Atlantic horseshoe crab).